A 310-amino-acid polypeptide reads, in one-letter code: Tagatose-6-phosphate kinase (310 aa).

Belongs to the carbohydrate kinase PfkB family. LacC subfamily.

The enzyme catalyses D-tagatofuranose 6-phosphate + ATP = D-tagatofuranose 1,6-bisphosphate + ADP + H(+). It participates in carbohydrate metabolism; D-tagatose 6-phosphate degradation; D-glyceraldehyde 3-phosphate and glycerone phosphate from D-tagatose 6-phosphate: step 1/2. This is Tagatose-6-phosphate kinase from Staphylococcus aureus (strain Mu3 / ATCC 700698).